We begin with the raw amino-acid sequence, 108 residues long: ATP-dependent Clp protease adapter protein ClpS (108 aa).

The protein belongs to the ClpS family. As to quaternary structure, binds to the N-terminal domain of the chaperone ClpA.

Involved in the modulation of the specificity of the ClpAP-mediated ATP-dependent protein degradation. This Ralstonia nicotianae (strain ATCC BAA-1114 / GMI1000) (Ralstonia solanacearum) protein is ATP-dependent Clp protease adapter protein ClpS.